Here is a 277-residue protein sequence, read N- to C-terminus: Ribonuclease HII (277 aa).

The RNase H type-2 domain occupies 72–260 (EYIAGIDEAG…IKEMIEMKKE (189 aa)). The a divalent metal cation site is built by aspartate 78, glutamate 79, and aspartate 170.

This sequence belongs to the RNase HII family. It depends on Mn(2+) as a cofactor. Requires Mg(2+) as cofactor.

It is found in the cytoplasm. The catalysed reaction is Endonucleolytic cleavage to 5'-phosphomonoester.. Endonuclease that specifically degrades the RNA of RNA-DNA hybrids. The sequence is that of Ribonuclease HII from Geobacillus sp. (strain WCH70).